The sequence spans 1372 residues: Paired amphipathic helix protein Sin3-like 1 (1372 aa).

Residues 1-50 (MKRIRDDVYASGSQFRRPLGSSRGQLCGQSPVHGSGDTEEEEEGGSRRVS) form a disordered region. PAH domains are found at residues 51 to 121 (QKLT…LPKG) and 136 to 206 (KTVE…LPAS). The segment covering 210–222 (HSAAQHSRSQAQQ) has biased composition (low complexity). Disordered stretches follow at residues 210-244 (HSAAQHSRSQAQQYSDRGSDPPLLHQMQVEKERRR) and 272-323 (REQR…SGSA). Basic and acidic residues predominate over residues 272–315 (REQRKRLDKENRARRGRDLDDREAGQDNLHHFPEKRKSSRRAEA). Positions 331–400 (LKSMYKQAFV…DEFNQFFERC (70 aa)) constitute a PAH 3 domain. Disordered regions lie at residues 764-783 (DVNHSTSPNGEAAVSSGGDT), 791-817 (LKSAANGDENSSSGTFKHGIGLLNKDS), and 934-1056 (GLRS…AEGM). The span at 938–957 (DSSKGTRNSDDPEGPSRNEK) shows a compositional bias: basic and acidic residues. Acidic residues-rich tracts occupy residues 990 to 1013 (AEAEVEADAEVENEDDADDVDSEN) and 1028 to 1042 (SQDEDREEENGEHDE). The residue at position 1049 (S1049) is a Phosphoserine.

In terms of assembly, interacts (via PAH3) with ALY2. Interacts (via PAH2) with TBP1. Interacts with ALY3, GATA21, TRP2, TKI1, VAL1, SKP1B, FBX5 and PUB14.

The protein resides in the nucleus. Its function is as follows. Acts as a transcriptional repressor. A histone deacetylase (HDAC) activity is required for transcription repression. May play a role in telomere stability. In Arabidopsis thaliana (Mouse-ear cress), this protein is Paired amphipathic helix protein Sin3-like 1 (SNL1).